The chain runs to 508 residues: DEAD-box ATP-dependent RNA helicase 8 (508 aa).

The tract at residues 1 to 123 is disordered; sequence MDPRARYPPG…LKLPPQDTRY (123 aa). The segment covering 18–53 has biased composition (low complexity); it reads NPNYYNRGPPLQQQHNHHQQQQTSAPHHQQYVQRQP. A compositionally biased stretch (basic residues) spans 54–64; that stretch reads QQHHHHNHHQQ. The Q motif signature appears at 134-162; sequence NEFEDYFLKRELLMGIYEKGFERPSPIQE. The Helicase ATP-binding domain maps to 165-335; it reads IPIALTGSDI…DKYLPKPYVI (171 aa). 178–185 is a binding site for ATP; the sequence is AKNGTGKT. Positions 283 to 286 match the DEAD box motif; it reads DEAD. The Helicase C-terminal domain maps to 345–505; it reads GITQFYAFVE…PIPPQIDQAI (161 aa).

Belongs to the DEAD box helicase family. DDX6/DHH1 subfamily.

It localises to the cytoplasm. Its subcellular location is the P-body. It catalyses the reaction ATP + H2O = ADP + phosphate + H(+). Functionally, ATP-dependent RNA helicase involved in mRNA turnover, and more specifically in mRNA decapping. The chain is DEAD-box ATP-dependent RNA helicase 8 from Oryza sativa subsp. japonica (Rice).